The following is a 355-amino-acid chain: Putative arylamide transporter (355 aa).

Helical transmembrane passes span 22–42 (TVLWPITQTSVVAGLAWYLTH), 44–64 (VFNHPQAFFAPISAVVCMSAT), 71–91 (RAQQMIVGVALGIVLGAGVHA), 92–112 (LLGSGPIAMGVVVFIALSVAV), 119–139 (VAQGLMFINQAAVSAVLVLVF), and 150–170 (LFDALVGGGLAIVFSILLFPP).

It localises to the cell membrane. In terms of biological role, may be involved in the import of arylamide compounds. The chain is Putative arylamide transporter from Mycobacterium bovis (strain ATCC BAA-935 / AF2122/97).